Here is a 477-residue protein sequence, read N- to C-terminus: Ribulose bisphosphate carboxylase large chain (477 aa).

Residues Met1–Ser2 constitute a propeptide that is removed on maturation. Pro3 carries the N-acetylproline modification. An N6,N6,N6-trimethyllysine modification is found at Lys14. Residues Asn123 and Thr173 each contribute to the substrate site. The Proton acceptor role is filled by Lys175. Lys177 lines the substrate pocket. The Mg(2+) site is built by Lys201, Asp203, and Glu204. Lys201 is subject to N6-carboxylysine. Catalysis depends on His294, which acts as the Proton acceptor. The substrate site is built by Arg295, His327, and Ser379.

This sequence belongs to the RuBisCO large chain family. Type I subfamily. As to quaternary structure, heterohexadecamer of 8 large chains and 8 small chains; disulfide-linked. The disulfide link is formed within the large subunit homodimers. The cofactor is Mg(2+). The disulfide bond which can form in the large chain dimeric partners within the hexadecamer appears to be associated with oxidative stress and protein turnover.

Its subcellular location is the plastid. The protein resides in the chloroplast. It catalyses the reaction 2 (2R)-3-phosphoglycerate + 2 H(+) = D-ribulose 1,5-bisphosphate + CO2 + H2O. The catalysed reaction is D-ribulose 1,5-bisphosphate + O2 = 2-phosphoglycolate + (2R)-3-phosphoglycerate + 2 H(+). RuBisCO catalyzes two reactions: the carboxylation of D-ribulose 1,5-bisphosphate, the primary event in carbon dioxide fixation, as well as the oxidative fragmentation of the pentose substrate in the photorespiration process. Both reactions occur simultaneously and in competition at the same active site. The chain is Ribulose bisphosphate carboxylase large chain from Persea americana (Avocado).